The chain runs to 91 residues: Teretoxin Tan22.13 (91 aa).

Positions M1 to K21 are cleaved as a signal peptide. Residues M22–R24 constitute a propeptide that is removed on maturation.

It belongs to the teretoxin C (TC) superfamily. Contains 4 disulfide bonds. As to expression, expressed by the venom duct.

Its subcellular location is the secreted. This chain is Teretoxin Tan22.13, found in Terebra anilis (Auger snail).